The chain runs to 223 residues: Killer cell lectin-like receptor subfamily B member 1A (223 aa).

Residues 1–43 (MDTARVYLSLKPSKTAAGAQCVSPPSLPPDACRCPRSHRLALK) are Cytoplasmic-facing. The LCK-binding motif motif lies at 32–35 (CRCP). A helical; Signal-anchor for type II membrane protein membrane pass occupies residues 44-63 (LSCAGLILLVLALVGMSILV). Residues 64 to 223 (RVLVQKPSVE…LKCECMCNDS (160 aa)) are Extracellular-facing. In terms of domain architecture, C-type lectin spans 93–212 (KCPKDWLSHR…DSDNIWVCQK (120 aa)). Intrachain disulfides connect Cys-94/Cys-105, Cys-122/Cys-210, and Cys-189/Cys-202.

In terms of assembly, homodimer; disulfide-linked. Interacts with tyrosine kinase LCK. Expressed in natural killer cells.

The protein localises to the membrane. Its function is as follows. Plays a stimulatory role on natural killer (NK) cell cytotoxicity. The protein is Killer cell lectin-like receptor subfamily B member 1A (Klrb1a) of Rattus norvegicus (Rat).